The chain runs to 201 residues: Adenylyl-sulfate kinase (201 aa).

Residue 35–42 participates in ATP binding; it reads GLSGSGKS. The active-site Phosphoserine intermediate is S109.

Belongs to the APS kinase family.

The catalysed reaction is adenosine 5'-phosphosulfate + ATP = 3'-phosphoadenylyl sulfate + ADP + H(+). It participates in sulfur metabolism; hydrogen sulfide biosynthesis; sulfite from sulfate: step 2/3. Its function is as follows. Catalyzes the synthesis of activated sulfate. The chain is Adenylyl-sulfate kinase from Shigella flexneri.